Here is a 354-residue protein sequence, read N- to C-terminus: tRNA-specific 2-thiouridylase MnmA (354 aa).

ATP-binding positions include 6 to 13 (LLSGGVDS) and leucine 33. The Nucleophile role is filled by cysteine 100. A disulfide bond links cysteine 100 and cysteine 195. An ATP-binding site is contributed by glycine 123. The interaction with tRNA stretch occupies residues 145–147 (KDQ). Cysteine 195 serves as the catalytic Cysteine persulfide intermediate.

This sequence belongs to the MnmA/TRMU family.

The protein resides in the cytoplasm. It carries out the reaction S-sulfanyl-L-cysteinyl-[protein] + uridine(34) in tRNA + AH2 + ATP = 2-thiouridine(34) in tRNA + L-cysteinyl-[protein] + A + AMP + diphosphate + H(+). Catalyzes the 2-thiolation of uridine at the wobble position (U34) of tRNA, leading to the formation of s(2)U34. This chain is tRNA-specific 2-thiouridylase MnmA, found in Borrelia turicatae (strain 91E135).